Reading from the N-terminus, the 370-residue chain is UDP-N-acetylglucosamine--N-acetylmuramyl-(pentapeptide) pyrophosphoryl-undecaprenol N-acetylglucosamine transferase (370 aa).

UDP-N-acetyl-alpha-D-glucosamine-binding positions include 10 to 12 (TGG), asparagine 126, serine 200, isoleucine 255, and glutamine 300.

Belongs to the glycosyltransferase 28 family. MurG subfamily.

It is found in the cell membrane. The catalysed reaction is Mur2Ac(oyl-L-Ala-gamma-D-Glu-L-Lys-D-Ala-D-Ala)-di-trans,octa-cis-undecaprenyl diphosphate + UDP-N-acetyl-alpha-D-glucosamine = beta-D-GlcNAc-(1-&gt;4)-Mur2Ac(oyl-L-Ala-gamma-D-Glu-L-Lys-D-Ala-D-Ala)-di-trans,octa-cis-undecaprenyl diphosphate + UDP + H(+). The protein operates within cell wall biogenesis; peptidoglycan biosynthesis. In terms of biological role, cell wall formation. Catalyzes the transfer of a GlcNAc subunit on undecaprenyl-pyrophosphoryl-MurNAc-pentapeptide (lipid intermediate I) to form undecaprenyl-pyrophosphoryl-MurNAc-(pentapeptide)GlcNAc (lipid intermediate II). The polypeptide is UDP-N-acetylglucosamine--N-acetylmuramyl-(pentapeptide) pyrophosphoryl-undecaprenol N-acetylglucosamine transferase (Lactobacillus gasseri (strain ATCC 33323 / DSM 20243 / BCRC 14619 / CIP 102991 / JCM 1131 / KCTC 3163 / NCIMB 11718 / NCTC 13722 / AM63)).